The sequence spans 110 residues: uncharacterized protein (110 aa).

The protein belongs to the RuBisCO large chain family.

The protein resides in the mitochondrion. This is an uncharacterized protein from Arabidopsis thaliana (Mouse-ear cress).